A 576-amino-acid chain; its full sequence is Arginine--tRNA ligase (576 aa).

A 'HIGH' region motif is present at residues 126–136 (ANPTGPMHIGH).

The protein belongs to the class-I aminoacyl-tRNA synthetase family. As to quaternary structure, monomer.

Its subcellular location is the cytoplasm. It catalyses the reaction tRNA(Arg) + L-arginine + ATP = L-arginyl-tRNA(Arg) + AMP + diphosphate. This Rickettsia peacockii (strain Rustic) protein is Arginine--tRNA ligase.